An 85-amino-acid polypeptide reads, in one-letter code: Small ribosomal subunit protein bS16c (85 aa).

It belongs to the bacterial ribosomal protein bS16 family.

It is found in the plastid. The protein resides in the chloroplast. The protein is Small ribosomal subunit protein bS16c of Saccharum hybrid (Sugarcane).